A 41-amino-acid polypeptide reads, in one-letter code: Large ribosomal subunit protein bL36A (41 aa).

It belongs to the bacterial ribosomal protein bL36 family.

This chain is Large ribosomal subunit protein bL36A, found in Aeromonas salmonicida (strain A449).